A 384-amino-acid chain; its full sequence is 8-amino-7-oxononanoate synthase (384 aa).

Arg-21 is a binding site for substrate. Pyridoxal 5'-phosphate is bound at residue 108 to 109 (GF). His-133 serves as a coordination point for substrate. The pyridoxal 5'-phosphate site is built by Ser-179, His-207, and Thr-233. Lys-236 carries the N6-(pyridoxal phosphate)lysine modification. Thr-352 provides a ligand contact to substrate.

This sequence belongs to the class-II pyridoxal-phosphate-dependent aminotransferase family. BioF subfamily. As to quaternary structure, homodimer. It depends on pyridoxal 5'-phosphate as a cofactor.

It catalyses the reaction 6-carboxyhexanoyl-[ACP] + L-alanine + H(+) = (8S)-8-amino-7-oxononanoate + holo-[ACP] + CO2. The protein operates within cofactor biosynthesis; biotin biosynthesis. Its function is as follows. Catalyzes the decarboxylative condensation of pimeloyl-[acyl-carrier protein] and L-alanine to produce 8-amino-7-oxononanoate (AON), [acyl-carrier protein], and carbon dioxide. The protein is 8-amino-7-oxononanoate synthase of Escherichia coli O6:H1 (strain CFT073 / ATCC 700928 / UPEC).